We begin with the raw amino-acid sequence, 453 residues long: MLLTLRVQGARHWLKSTRCLASSAAPAKSPSSPPQLEVSGSTYATDGWTNVTPKILSYVGANKHLQTDHPLSIIRQRIVNYFYGAYRNQRGNPLFSVYDQMNPVVTVQQNFDNLLIPADHVSRQKSDCYYINQQHLLRAHTTAHQVELISGGLDNFLVVGEVYRRDEIDSTHYPVFHQADAVRLVTKDKLFERNPGLELFEETWSGTLADPKLILPSSKFMDQTKQPCHTLEAVKLMEHEMKHVLVGLTKDLFGPRIKYRWVDTYFPFTQPSWELEIYFKDNWLEVLGCGIMRHEILQRSGVHQSIGYAFGVGLERLAMVLFDIPDIRLFWSNDSGFLSQFSEKDLHNLPKYKPISHYPQCTNDLSFWLPQDIEVDAGFSPNDFYDLVRSVAGDMVEQISLVDKFKHPKTGKSSVCFRIVYRHMERTLTQAEVNEIHKQIASASVDSFNVQIR.

A mitochondrion-targeting transit peptide spans M1–A27. Residues T142 to Q145, R164, T171 to Y173, Q178 to D180, E285, and F310 each bind substrate. The 98-residue stretch at S356–R453 folds into the FDX-ACB domain.

The protein belongs to the class-II aminoacyl-tRNA synthetase family.

Its subcellular location is the mitochondrion matrix. The catalysed reaction is tRNA(Phe) + L-phenylalanine + ATP = L-phenylalanyl-tRNA(Phe) + AMP + diphosphate + H(+). Its function is as follows. Is responsible for the charging of tRNA(Phe) with phenylalanine in mitochondrial translation. The polypeptide is Probable phenylalanine--tRNA ligase, mitochondrial (Drosophila melanogaster (Fruit fly)).